A 668-amino-acid polypeptide reads, in one-letter code: tRNA 5-methylaminomethyl-2-thiouridine biosynthesis bifunctional protein MnmC (668 aa).

The tRNA (mnm(5)s(2)U34)-methyltransferase stretch occupies residues 1-245; the sequence is MKHYSIQPAN…KREMLCGVME (245 aa). The tract at residues 270–668 is FAD-dependent cmnm(5)s(2)U34 oxidoreductase; the sequence is IGGGIACALL…LLKGKAVKAG (399 aa).

This sequence in the N-terminal section; belongs to the methyltransferase superfamily. tRNA (mnm(5)s(2)U34)-methyltransferase family. It in the C-terminal section; belongs to the DAO family. Requires FAD as cofactor.

The protein localises to the cytoplasm. It carries out the reaction 5-aminomethyl-2-thiouridine(34) in tRNA + S-adenosyl-L-methionine = 5-methylaminomethyl-2-thiouridine(34) in tRNA + S-adenosyl-L-homocysteine + H(+). Functionally, catalyzes the last two steps in the biosynthesis of 5-methylaminomethyl-2-thiouridine (mnm(5)s(2)U) at the wobble position (U34) in tRNA. Catalyzes the FAD-dependent demodification of cmnm(5)s(2)U34 to nm(5)s(2)U34, followed by the transfer of a methyl group from S-adenosyl-L-methionine to nm(5)s(2)U34, to form mnm(5)s(2)U34. The protein is tRNA 5-methylaminomethyl-2-thiouridine biosynthesis bifunctional protein MnmC of Shigella boydii serotype 18 (strain CDC 3083-94 / BS512).